The sequence spans 640 residues: RAP domain-containing protein, chloroplastic (640 aa).

The N-terminal 32 residues, 1–32, are a transit peptide targeting the chloroplast; the sequence is MEAALLRPPPLAARGGVSIAIAFSVSRLPSAA. The disordered stretch occupies residues 111-158; sequence SLQRMVASPKKKNKKKKSKKTNLKQKKAAEPKPPRDTDDDEDDEEEAD. Residues 119–136 are compositionally biased toward basic residues; that stretch reads PKKKNKKKKSKKTNLKQK. Basic and acidic residues predominate over residues 137 to 146; that stretch reads KAAEPKPPRD. The span at 147–158 shows a compositional bias: acidic residues; sequence TDDDEDDEEEAD. The RAP domain maps to 575-633; sequence LAFEIDGPSHFSRNLGTPLGHTAFKRRYIAAAGWNLVSLSHQEWENLEGEFEQLEYLRR.

As to expression, expressed in roots, leaf sheaths, veins of leaf blade, mature leaves, endodermis of culm, panicles and anthers.

The protein localises to the plastid. It localises to the chloroplast. Probable RNA-binding protein that plays an essential role in chloroplast development. Regulates the ribosomal proteins homeostasis and ribosomal RNA development in chloroplasts. Involved the regulation of 16S rRNA and required for the expression of chloroplast-associated photosynthetic genes. The protein is RAP domain-containing protein, chloroplastic of Oryza sativa subsp. japonica (Rice).